Consider the following 565-residue polypeptide: Dihydroxy-acid dehydratase (565 aa).

Asp-80 contacts Mg(2+). A [2Fe-2S] cluster-binding site is contributed by Cys-121. Mg(2+)-binding residues include Asp-122 and Lys-123. N6-carboxylysine is present on Lys-123. Cys-194 serves as a coordination point for [2Fe-2S] cluster. Residue Glu-447 participates in Mg(2+) binding. The active-site Proton acceptor is Ser-473.

Belongs to the IlvD/Edd family. As to quaternary structure, homodimer. Requires [2Fe-2S] cluster as cofactor. The cofactor is Mg(2+).

The enzyme catalyses (2R)-2,3-dihydroxy-3-methylbutanoate = 3-methyl-2-oxobutanoate + H2O. It catalyses the reaction (2R,3R)-2,3-dihydroxy-3-methylpentanoate = (S)-3-methyl-2-oxopentanoate + H2O. Its pathway is amino-acid biosynthesis; L-isoleucine biosynthesis; L-isoleucine from 2-oxobutanoate: step 3/4. The protein operates within amino-acid biosynthesis; L-valine biosynthesis; L-valine from pyruvate: step 3/4. Functionally, functions in the biosynthesis of branched-chain amino acids. Catalyzes the dehydration of (2R,3R)-2,3-dihydroxy-3-methylpentanoate (2,3-dihydroxy-3-methylvalerate) into 2-oxo-3-methylpentanoate (2-oxo-3-methylvalerate) and of (2R)-2,3-dihydroxy-3-methylbutanoate (2,3-dihydroxyisovalerate) into 2-oxo-3-methylbutanoate (2-oxoisovalerate), the penultimate precursor to L-isoleucine and L-valine, respectively. The chain is Dihydroxy-acid dehydratase from Chlorobium luteolum (strain DSM 273 / BCRC 81028 / 2530) (Pelodictyon luteolum).